Here is a 570-residue protein sequence, read N- to C-terminus: Proline--tRNA ligase (570 aa).

Belongs to the class-II aminoacyl-tRNA synthetase family. ProS type 1 subfamily. Homodimer.

It is found in the cytoplasm. The enzyme catalyses tRNA(Pro) + L-proline + ATP = L-prolyl-tRNA(Pro) + AMP + diphosphate. Catalyzes the attachment of proline to tRNA(Pro) in a two-step reaction: proline is first activated by ATP to form Pro-AMP and then transferred to the acceptor end of tRNA(Pro). As ProRS can inadvertently accommodate and process non-cognate amino acids such as alanine and cysteine, to avoid such errors it has two additional distinct editing activities against alanine. One activity is designated as 'pretransfer' editing and involves the tRNA(Pro)-independent hydrolysis of activated Ala-AMP. The other activity is designated 'posttransfer' editing and involves deacylation of mischarged Ala-tRNA(Pro). The misacylated Cys-tRNA(Pro) is not edited by ProRS. The polypeptide is Proline--tRNA ligase (Neisseria gonorrhoeae (strain ATCC 700825 / FA 1090)).